The sequence spans 218 residues: Carboxylesterase 2 (218 aa).

Residues serine 114, aspartate 168, and histidine 199 each act as charge relay system in the active site.

The protein belongs to the AB hydrolase superfamily. AB hydrolase 2 family. In terms of assembly, homodimer.

It catalyses the reaction a carboxylic ester + H2O = an alcohol + a carboxylate + H(+). Its function is as follows. Hydrolyzes carboxylic ester bonds with relatively broad substrate specificity. The protein is Carboxylesterase 2 (estB) of Pseudomonas fluorescens.